Here is a 450-residue protein sequence, read N- to C-terminus: Chromosomal replication initiator protein DnaA (450 aa).

Residues 1–84 are domain I, interacts with DnaA modulators; that stretch reads MTENEQIFWN…AVDYVYEDNL (84 aa). Residues 84–109 are domain II; the sequence is LMIEQQHQGQQGYTEQAFQQLPAVQS. The tract at residues 110 to 328 is domain III, AAA+ region; the sequence is DLNPKYSFDN…GALKDISLVA (219 aa). ATP contacts are provided by G154, G156, K157, and T158. The segment at 329 to 450 is domain IV, binds dsDNA; it reads NFKQIDTITV…EIETIKNKIK (122 aa).

Belongs to the DnaA family. As to quaternary structure, oligomerizes as a right-handed, spiral filament on DNA at oriC.

The protein resides in the cytoplasm. Plays an essential role in the initiation and regulation of chromosomal replication. ATP-DnaA binds to the origin of replication (oriC) to initiate formation of the DNA replication initiation complex once per cell cycle. Binds the DnaA box (a 9 base pair repeat at the origin) and separates the double-stranded (ds)DNA. Forms a right-handed helical filament on oriC DNA; dsDNA binds to the exterior of the filament while single-stranded (ss)DNA is stabiized in the filament's interior. The ATP-DnaA-oriC complex binds and stabilizes one strand of the AT-rich DNA unwinding element (DUE), permitting loading of DNA polymerase. After initiation quickly degrades to an ADP-DnaA complex that is not apt for DNA replication. Binds acidic phospholipids. In Streptococcus equi subsp. zooepidemicus (strain H70), this protein is Chromosomal replication initiator protein DnaA.